A 256-amino-acid chain; its full sequence is Dihydromonacolin L-[lovastatin nonaketide synthase] thioesterase (256 aa).

Catalysis depends on charge relay system residues serine 122, aspartate 201, and histidine 229.

The protein belongs to the LovG family.

It catalyses the reaction dihydromonacolin L-[lovastatin nonaketide synthase] + H2O = holo-[lovastatin nonaketide synthase] + dihydromonacolin L carboxylate + H(+). It functions in the pathway polyketide biosynthesis; lovastatin biosynthesis. Its function is as follows. Esterase; part of the gene cluster that mediates the biosynthesis of lovastatin (also known as mevinolin, mevacor or monacolin K), a hypolipidemic inhibitor of (3S)-hydroxymethylglutaryl-coenzyme A (HMG-CoA) reductase (HMGR). The first step in the biosynthesis of lovastatin is the production of dihydromonacolin L acid by the lovastatin nonaketide synthase lovB and the trans-acting enoyl reductase lovC via condensation of one acetyl-CoA unit and 8 malonyl-CoA units. Dihydromonacolin L acid is released from lovB by the thioesterase lovG. Next, dihydromonacolin L acid is oxidized by the dihydromonacolin L monooxygenase lovA twice to form monacolin J acid. The 2-methylbutyrate moiety of lovastatin is synthesized by the lovastatin diketide synthase lovF via condensation of one acetyl-CoA unit and one malonyl-CoA unit. Finally, the covalent attachment of this moiety to monacolin J acid is catalyzed by the transesterase lovD to yield lovastatin. LovD has broad substrate specificity and can also convert monacolin J to simvastatin using alpha-dimethylbutanoyl-S-methyl-3-mercaptopropionate (DMB-S-MMP) as the thioester acyl donor, and can also catalyze the reverse reaction and function as hydrolase in vitro. LovD has much higher activity with LovF-bound 2-methylbutanoate than with free diketide substrates. Esterase that catalyzes the release of covalently bound dihydromonacolin L from LovB during lovastatin biosynthesis. The protein is Dihydromonacolin L-[lovastatin nonaketide synthase] thioesterase of Aspergillus terreus.